The primary structure comprises 256 residues: ATP-dependent dethiobiotin synthetase BioD (256 aa).

ATP is bound at residue 13 to 18 (EVGKTY). Position 17 (Thr-17) interacts with Mg(2+). The active site involves Lys-38. Residue Ser-42 coordinates substrate. Residues Asp-56, 118–121 (EGAG), and 187–188 (NR) contribute to the ATP site. Residues Asp-56 and Glu-118 each coordinate Mg(2+).

Belongs to the dethiobiotin synthetase family. In terms of assembly, homodimer. The cofactor is Mg(2+).

It localises to the cytoplasm. It carries out the reaction (7R,8S)-7,8-diammoniononanoate + CO2 + ATP = (4R,5S)-dethiobiotin + ADP + phosphate + 3 H(+). It functions in the pathway cofactor biosynthesis; biotin biosynthesis; biotin from 7,8-diaminononanoate: step 1/2. Its function is as follows. Catalyzes a mechanistically unusual reaction, the ATP-dependent insertion of CO2 between the N7 and N8 nitrogen atoms of 7,8-diaminopelargonic acid (DAPA, also called 7,8-diammoniononanoate) to form a ureido ring. This chain is ATP-dependent dethiobiotin synthetase BioD, found in Rhodopirellula baltica (strain DSM 10527 / NCIMB 13988 / SH1).